We begin with the raw amino-acid sequence, 229 residues long: MASERPTGSESGDAGVVLEGNREASQDIKMALYKHGRLIPSLGDAKFGRPMIAEILEKKFESYRNDQTLNIRGTLFFGVSSSLSGVMANLVFRYSFKVKYEALRTYASLTTLPFVATAVTYKLFVTDALQSGNISQESCVLRSSLIGVACGVSYPSALAFYKNGRLAVKYHTVPVPPKGRVMLHWLLLCQTGMKAMAVPLLFQIIFGVFNGLYHYAVCEKAYARIVPDD.

4 helical membrane passes run 71 to 91, 109 to 129, 140 to 160, and 198 to 218; these read IRGTLFFGVSSSLSGVMANLV, LTTLPFVATAVTYKLFVTDAL, VLRSSLIGVACGVSYPSALAF, and VPLLFQIIFGVFNGLYHYAVC.

As to quaternary structure, part of the mitochondrial complex I assembly/MCIA complex that comprises at least the core subunits TMEM126B, NDUFAF1, ECSIT and ACAD9 and complement subunits such as COA1 and TMEM186. Associates with the intermediate 370 kDa subcomplex of incompletely assembled complex I. Interacts with TMEM70.

Its subcellular location is the mitochondrion membrane. Its function is as follows. As part of the MCIA complex, involved in the assembly of the mitochondrial complex I. Participates in constructing the membrane arm of complex I. This is Complex I assembly factor TMEM126B, mitochondrial from Rattus norvegicus (Rat).